We begin with the raw amino-acid sequence, 501 residues long: Glycerol kinase (501 aa).

Threonine 17 is a binding site for ADP. Residues threonine 17, threonine 18, and serine 19 each coordinate ATP. A sn-glycerol 3-phosphate-binding site is contributed by threonine 17. ADP is bound at residue arginine 21. Sn-glycerol 3-phosphate-binding residues include arginine 87, glutamate 88, tyrosine 139, and aspartate 243. Positions 87, 88, 139, 243, and 244 each coordinate glycerol. Residues threonine 265 and glycine 308 each contribute to the ADP site. ATP-binding residues include threonine 265, glycine 308, glutamine 312, and glycine 409. ADP contacts are provided by glycine 409 and asparagine 413.

Belongs to the FGGY kinase family.

The enzyme catalyses glycerol + ATP = sn-glycerol 3-phosphate + ADP + H(+). The protein operates within polyol metabolism; glycerol degradation via glycerol kinase pathway; sn-glycerol 3-phosphate from glycerol: step 1/1. Its activity is regulated as follows. Inhibited by fructose 1,6-bisphosphate (FBP). Functionally, key enzyme in the regulation of glycerol uptake and metabolism. Catalyzes the phosphorylation of glycerol to yield sn-glycerol 3-phosphate. The chain is Glycerol kinase from Pseudomonas fluorescens (strain ATCC BAA-477 / NRRL B-23932 / Pf-5).